We begin with the raw amino-acid sequence, 92 residues long: C-C motif chemokine 4 (92 aa).

The N-terminal stretch at 1-23 is a signal peptide; that stretch reads MKLCVSAFSLLLLVAAFCDSVLS. Disulfide bonds link C34-C58 and C35-C74.

This sequence belongs to the intercrine beta (chemokine CC) family. Homodimer.

Its subcellular location is the secreted. Monokine with inflammatory and chemokinetic properties. The chain is C-C motif chemokine 4 (Ccl4) from Rattus norvegicus (Rat).